We begin with the raw amino-acid sequence, 161 residues long: 2-C-methyl-D-erythritol 2,4-cyclodiphosphate synthase (161 aa).

Residues aspartate 9 and histidine 11 each coordinate a divalent metal cation. 4-CDP-2-C-methyl-D-erythritol 2-phosphate is bound by residues 9 to 11 (DFH) and 37 to 38 (HS). Position 45 (histidine 45) interacts with a divalent metal cation. Residues 59-61 (DIG), 64-68 (FPDTD), 135-138 (TTTE), and arginine 145 each bind 4-CDP-2-C-methyl-D-erythritol 2-phosphate.

It belongs to the IspF family. In terms of assembly, homotrimer. The cofactor is a divalent metal cation.

It catalyses the reaction 4-CDP-2-C-methyl-D-erythritol 2-phosphate = 2-C-methyl-D-erythritol 2,4-cyclic diphosphate + CMP. It functions in the pathway isoprenoid biosynthesis; isopentenyl diphosphate biosynthesis via DXP pathway; isopentenyl diphosphate from 1-deoxy-D-xylulose 5-phosphate: step 4/6. Its function is as follows. Involved in the biosynthesis of isopentenyl diphosphate (IPP) and dimethylallyl diphosphate (DMAPP), two major building blocks of isoprenoid compounds. Catalyzes the conversion of 4-diphosphocytidyl-2-C-methyl-D-erythritol 2-phosphate (CDP-ME2P) to 2-C-methyl-D-erythritol 2,4-cyclodiphosphate (ME-CPP) with a corresponding release of cytidine 5-monophosphate (CMP). In Leptospira interrogans serogroup Icterohaemorrhagiae serovar Lai (strain 56601), this protein is 2-C-methyl-D-erythritol 2,4-cyclodiphosphate synthase.